Consider the following 757-residue polypeptide: 5-methyltetrahydropteroyltriglutamate--homocysteine methyltransferase (757 aa).

2 residues coordinate 5-methyltetrahydropteroyltri-L-glutamate: Lys18 and Asn116. Residue 437–439 (IGS) coordinates L-homocysteine. L-methionine contacts are provided by residues 437 to 439 (IGS) and Glu490. 5-methyltetrahydropteroyltri-L-glutamate is bound by residues 521–522 (RC) and Trp567. Asp605 contacts L-homocysteine. An L-methionine-binding site is contributed by Asp605. Residues His647, Cys649, His658, Asp662, and Glu671 each contribute to the Zn(2+) site. The active-site Proton donor is His701. Cys733 is a binding site for Zn(2+).

Belongs to the vitamin-B12 independent methionine synthase family. Zn(2+) serves as cofactor. In terms of tissue distribution, expressed in pollen (at protein level).

It carries out the reaction 5-methyltetrahydropteroyltri-L-glutamate + L-homocysteine = tetrahydropteroyltri-L-glutamate + L-methionine. It participates in amino-acid biosynthesis; L-methionine biosynthesis via de novo pathway; L-methionine from L-homocysteine (MetE route): step 1/1. Catalyzes the transfer of a methyl group from 5-methyltetrahydrofolate to homocysteine resulting in methionine formation. The sequence is that of 5-methyltetrahydropteroyltriglutamate--homocysteine methyltransferase from Kali turgidum (Prickly saltwort).